Here is a 427-residue protein sequence, read N- to C-terminus: Peptidase B (427 aa).

Lys-195 and Asp-200 together coordinate Mn(2+). Lys-207 is an active-site residue. Residues Asp-218, Asp-277, and Glu-279 each contribute to the Mn(2+) site. Residue Arg-281 is part of the active site.

Belongs to the peptidase M17 family. As to quaternary structure, homohexamer. The cofactor is Mn(2+).

The protein resides in the cytoplasm. The enzyme catalyses Release of an N-terminal amino acid, Xaa, from a peptide or arylamide. Xaa is preferably Glu or Asp but may be other amino acids, including Leu, Met, His, Cys and Gln.. Probably plays an important role in intracellular peptide degradation. This chain is Peptidase B, found in Citrobacter koseri (strain ATCC BAA-895 / CDC 4225-83 / SGSC4696).